Here is a 641-residue protein sequence, read N- to C-terminus: ATP-dependent zinc metalloprotease FtsH 2 (641 aa).

The Periplasmic segment spans residues 1 to 100; it reads MLAYYVSVNQ…IDVKVIHNFW (100 aa). Residues 101-121 traverse the membrane as a helical segment; sequence GQAFLSVLPFLLFILALYFLF. Over 122 to 641 the chain is Cytoplasmic; sequence RQQIRMAGRG…LLPGLEGAPA (520 aa). Residue 193-200 participates in ATP binding; sequence GPPGTGKT. H415 contacts Zn(2+). The active site involves E416. Zn(2+)-binding residues include H419 and D491. The tract at residues 593–641 is disordered; that stretch reads KTGKMTNPPSKNSSPVSNGGEASSTKSPARQEETTKDGGLLPGLEGAPA. Composition is skewed to low complexity over residues 599–610 and 630–641; these read NPPSKNSSPVSN and GGLLPGLEGAPA.

This sequence in the central section; belongs to the AAA ATPase family. It in the C-terminal section; belongs to the peptidase M41 family. Homohexamer. The cofactor is Zn(2+).

It is found in the cell inner membrane. Acts as a processive, ATP-dependent zinc metallopeptidase for both cytoplasmic and membrane proteins. Plays a role in the quality control of integral membrane proteins. This is ATP-dependent zinc metalloprotease FtsH 2 from Methylacidiphilum infernorum (isolate V4) (Methylokorus infernorum (strain V4)).